The primary structure comprises 603 residues: UvrABC system protein C (603 aa).

The GIY-YIG domain maps to 15–92; sequence DQPGCYLMKD…IKKHDPRFNI (78 aa). Residues 197 to 232 form the UVR domain; the sequence is KTVKNDLMKKMQEAAENMEFEKAGEFRDQINAIETT.

This sequence belongs to the UvrC family. As to quaternary structure, interacts with UvrB in an incision complex.

The protein resides in the cytoplasm. In terms of biological role, the UvrABC repair system catalyzes the recognition and processing of DNA lesions. UvrC both incises the 5' and 3' sides of the lesion. The N-terminal half is responsible for the 3' incision and the C-terminal half is responsible for the 5' incision. This is UvrABC system protein C from Listeria innocua serovar 6a (strain ATCC BAA-680 / CLIP 11262).